Consider the following 116-residue polypeptide: MQIVALTLVAFVAIAGASCPYAAPAPAYSAPAASSGYPAPPCPTNYLFSCQPNLAPAPCAQEAPAYGSAGAYTEQVPHYVGSPNREQLQQFHQRIGMAALMEELRGLGQGIQGQQY.

The first 17 residues, 1 to 17 (MQIVALTLVAFVAIAGA), serve as a signal peptide directing secretion. The region spanning 36-73 (GYPAPPCPTNYLFSCQPNLAPAPCAQEAPAYGSAGAYT) is the VM domain.

The protein belongs to the vitelline membrane family. Sulfated by pip; may be involved in embryo dorsal-ventral axis determination. Sulfation by pip may occur on covalently bound glycosaminoglycans. As to expression, expressed in stage 10 egg-chambers, localized in the outer eggshell (chorion membrane).

Its subcellular location is the secreted. Functionally, major early eggshell protein. This Drosophila melanogaster (Fruit fly) protein is Vitelline membrane protein Vm32E.